The following is a 63-amino-acid chain: Large ribosomal subunit protein uL29 (63 aa).

The protein belongs to the universal ribosomal protein uL29 family.

The polypeptide is Large ribosomal subunit protein uL29 (Shewanella baltica (strain OS223)).